The following is a 62-amino-acid chain: Large ribosomal subunit protein bL28 (62 aa).

It belongs to the bacterial ribosomal protein bL28 family.

This is Large ribosomal subunit protein bL28 from Streptococcus mutans serotype c (strain ATCC 700610 / UA159).